The primary structure comprises 595 residues: Fructan 1-exohydrolase (595 aa).

The signal sequence occupies residues 1–20; sequence MAQAWAFLLPLLVLGSYVTS. The active site involves D74. N167, N235, and N247 each carry an N-linked (GlcNAc...) asparagine glycan. Cysteines 445 and 491 form a disulfide. An N-linked (GlcNAc...) asparagine glycan is attached at N566.

It belongs to the glycosyl hydrolase 32 family.

The enzyme catalyses Hydrolysis of terminal, non-reducing (2-&gt;1)-linked beta-D-fructofuranose residues in fructans.. With respect to regulation, inhibited by sucrose. In terms of biological role, hydrolyzes inulin-type beta-(2,1)-fructans. May play a role as a beta-(2,1)-trimmer during graminan biosynthesis. The protein is Fructan 1-exohydrolase of Aegilops speltoides (Goatgrass).